The following is a 291-amino-acid chain: 4-diphosphocytidyl-2-C-methyl-D-erythritol kinase (291 aa).

The active site involves Lys10. 94-104 (PVSAGLAGGSS) is an ATP binding site. The active site involves Asp136.

The protein belongs to the GHMP kinase family. IspE subfamily.

The enzyme catalyses 4-CDP-2-C-methyl-D-erythritol + ATP = 4-CDP-2-C-methyl-D-erythritol 2-phosphate + ADP + H(+). Its pathway is isoprenoid biosynthesis; isopentenyl diphosphate biosynthesis via DXP pathway; isopentenyl diphosphate from 1-deoxy-D-xylulose 5-phosphate: step 3/6. Catalyzes the phosphorylation of the position 2 hydroxy group of 4-diphosphocytidyl-2C-methyl-D-erythritol. This chain is 4-diphosphocytidyl-2-C-methyl-D-erythritol kinase, found in Listeria monocytogenes serotype 4a (strain HCC23).